A 194-amino-acid chain; its full sequence is MWKFVKSALKKETWVKCEDCIQICFWGRSNVGKSSLLNALVNQKISYVSKQPGRTQFINYFQEENRFIVDLPGYGYAQLSKEKIEEMNYWISAFLKDDKCTKVMFLLIDSRTGITKIDLEKLAFLKAINLPIHLIYTKIDKLNQKEKSALVKKHNEYLDSNLLNESTNSFLVSSTNKIGLDDLVLFIEENIFKK.

The 175-residue stretch at 19-193 (DCIQICFWGR…VLFIEENIFK (175 aa)) folds into the EngB-type G domain. GTP-binding positions include 27–34 (GRSNVGKS), 53–57 (GRTQF), 70–73 (DLPG), 137–140 (TKID), and 172–174 (VSS). The Mg(2+) site is built by S34 and T55.

It belongs to the TRAFAC class TrmE-Era-EngA-EngB-Septin-like GTPase superfamily. EngB GTPase family. Requires Mg(2+) as cofactor.

Its function is as follows. Necessary for normal cell division and for the maintenance of normal septation. This chain is Probable GTP-binding protein EngB, found in Mycoplasmopsis agalactiae (strain NCTC 10123 / CIP 59.7 / PG2) (Mycoplasma agalactiae).